A 325-amino-acid chain; its full sequence is Pyruvate dehydrogenase E1 component subunit beta (325 aa).

Position 60 (Glu-60) interacts with thiamine diphosphate.

As to quaternary structure, heterodimer of an alpha and a beta chain. Thiamine diphosphate is required as a cofactor.

It catalyses the reaction N(6)-[(R)-lipoyl]-L-lysyl-[protein] + pyruvate + H(+) = N(6)-[(R)-S(8)-acetyldihydrolipoyl]-L-lysyl-[protein] + CO2. In terms of biological role, the pyruvate dehydrogenase complex catalyzes the overall conversion of pyruvate to acetyl-CoA and CO(2). It contains multiple copies of three enzymatic components: pyruvate dehydrogenase (E1), dihydrolipoamide acetyltransferase (E2) and lipoamide dehydrogenase (E3). In Geobacillus stearothermophilus (Bacillus stearothermophilus), this protein is Pyruvate dehydrogenase E1 component subunit beta (pdhB).